Here is a 348-residue protein sequence, read N- to C-terminus: Enkurin domain-containing protein 1 (348 aa).

Disordered stretches follow at residues 1 to 65, 84 to 195, and 262 to 282; these read MCEG…RPGG, GGIS…PSAK, and AEAR…TRMP. Position 93 is a phosphoserine (Ser-93). Positions 95-127 are enriched in basic and acidic residues; the sequence is KRKDPKDHEKENMRRIREIQRRFREQEHSREQG. The residue at position 138 (Ser-138) is a Phosphoserine. The segment covering 139–148 has biased composition (basic and acidic residues); sequence PKYDKVESRV. Residues 253 to 345 enclose the Enkurin domain; sequence ERRDLWRREA…IFSRPKVFVK (93 aa).

As to quaternary structure, interacts with alpha-tubulin. Interacts (via central region) with CCP110 (via N-terminal region); competes with CEP97 for binding to CCP110.

The protein resides in the cytoplasm. It localises to the cytoskeleton. It is found in the microtubule organizing center. The protein localises to the centrosome. Its subcellular location is the centriole. The protein resides in the cilium basal body. It localises to the cell projection. It is found in the cilium. The protein localises to the spindle. Its subcellular location is the spindle pole. The protein resides in the cilium axoneme. In terms of biological role, microtubule-binding protein which regulates microtubule organization and stability. Promotes the stability of astral microtubules and facilitates the proper orientation of the mitotic spindle. This allows the oriented division of basal keratinocytes and contributes to epidermal stratification. Required for the assembly of both primary and motile cilia. Destabilizes the interaction between CCP110 and CEP97 by competing with CEP97 for binding to CCP110 which promotes the removal of CCP110 and CEP97 from the mother centriole and allows the initiation of ciliogenesis. The polypeptide is Enkurin domain-containing protein 1 (ENKD1) (Bos taurus (Bovine)).